The sequence spans 364 residues: GDP-fucose transporter 1 (364 aa).

Helical transmembrane passes span 34–56 (FLLR…ISMV), 76–98 (VTFY…AACC), 111–130 (LRVA…MITF), 140–162 (VAFY…YLLL), 167–185 (SFYA…WLGV), 195–214 (SWLG…LNAI), 227–249 (IWRL…LLLL), and 264–286 (AHFW…VTGL).

The protein belongs to the TPT transporter family. SLC35C subfamily.

The protein localises to the golgi apparatus membrane. The enzyme catalyses GMP(out) + GDP-beta-L-fucose(in) = GMP(in) + GDP-beta-L-fucose(out). Functionally, antiporter specific for GDP-l-fucose and depending on the concomitant reverse transport of GMP. Involved in GDP-fucose import from the cytoplasm into the Golgi lumen. The polypeptide is GDP-fucose transporter 1 (Homo sapiens (Human)).